Here is a 388-residue protein sequence, read N- to C-terminus: Reducing end xylose-releasing exo-oligoxylanase (388 aa).

Residue glutamate 70 is the Proton donor of the active site. Aspartate 263 acts as the Proton acceptor in catalysis.

This sequence belongs to the glycosyl hydrolase 8 (cellulase D) family.

The enzyme catalyses Hydrolysis of (1-&gt;4)-beta-D-xylose residues from the reducing end of oligosaccharides.. Functionally, hydrolyzes xylooligosaccharides with a degree of polymerization of greater than or equal to 3, releasing xylose from the reducing end. Only hydrolyzes the beta anomers of xylooligosaccharides, with inversion of anomeric configuration. Hydrolyzes the glucose and xylose-based trisaccharides where xylose is located at the -1 subsite, GXX, XXG and GXG. Does not hydrolyze xylan, chitosan, lichenan, curdlan or carboxymethylcellulose. This is Reducing end xylose-releasing exo-oligoxylanase from Halalkalibacterium halodurans (strain ATCC BAA-125 / DSM 18197 / FERM 7344 / JCM 9153 / C-125) (Bacillus halodurans).